The following is a 233-amino-acid chain: Orotidine 5'-phosphate decarboxylase (233 aa).

Substrate is bound by residues aspartate 11, lysine 34, 61–70 (DLKLHDIPNT), threonine 117, arginine 179, glutamine 189, glycine 209, and arginine 210. Lysine 63 (proton donor) is an active-site residue.

This sequence belongs to the OMP decarboxylase family. Type 1 subfamily. As to quaternary structure, homodimer.

It carries out the reaction orotidine 5'-phosphate + H(+) = UMP + CO2. The protein operates within pyrimidine metabolism; UMP biosynthesis via de novo pathway; UMP from orotate: step 2/2. Its function is as follows. Catalyzes the decarboxylation of orotidine 5'-monophosphate (OMP) to uridine 5'-monophosphate (UMP). The chain is Orotidine 5'-phosphate decarboxylase from Streptococcus agalactiae serotype V (strain ATCC BAA-611 / 2603 V/R).